The chain runs to 203 residues: Small ribosomal subunit protein uS4 (203 aa).

An S4 RNA-binding domain is found at 93–156 (RRLDNVVYRL…MKVPAILEAV (64 aa)).

This sequence belongs to the universal ribosomal protein uS4 family. In terms of assembly, part of the 30S ribosomal subunit. Contacts protein S5. The interaction surface between S4 and S5 is involved in control of translational fidelity.

Functionally, one of the primary rRNA binding proteins, it binds directly to 16S rRNA where it nucleates assembly of the body of the 30S subunit. With S5 and S12 plays an important role in translational accuracy. This chain is Small ribosomal subunit protein uS4, found in Streptococcus pyogenes serotype M49 (strain NZ131).